Reading from the N-terminus, the 71-residue chain is Small ribosomal subunit protein bS18 (71 aa).

Belongs to the bacterial ribosomal protein bS18 family. In terms of assembly, part of the 30S ribosomal subunit. Forms a tight heterodimer with protein bS6.

Functionally, binds as a heterodimer with protein bS6 to the central domain of the 16S rRNA, where it helps stabilize the platform of the 30S subunit. The polypeptide is Small ribosomal subunit protein bS18 (Dichelobacter nodosus (strain VCS1703A)).